Here is a 241-residue protein sequence, read N- to C-terminus: Uridylate kinase (241 aa).

Residue 14–17 participates in ATP binding; it reads KLSG. Position 56 (Gly56) interacts with UMP. 2 residues coordinate ATP: Gly57 and Arg61. UMP-binding positions include Asp77 and 138 to 145; that span reads TGNPFFTT. 3 residues coordinate ATP: Thr165, Tyr171, and Asp174.

The protein belongs to the UMP kinase family. As to quaternary structure, homohexamer.

The protein localises to the cytoplasm. It carries out the reaction UMP + ATP = UDP + ADP. The protein operates within pyrimidine metabolism; CTP biosynthesis via de novo pathway; UDP from UMP (UMPK route): step 1/1. Its activity is regulated as follows. Inhibited by UTP. Functionally, catalyzes the reversible phosphorylation of UMP to UDP. This Psychrobacter cryohalolentis (strain ATCC BAA-1226 / DSM 17306 / VKM B-2378 / K5) protein is Uridylate kinase.